A 653-amino-acid chain; its full sequence is Fructose-1,6-bisphosphatase class 3 (653 aa).

It belongs to the FBPase class 3 family. It depends on Mn(2+) as a cofactor.

The catalysed reaction is beta-D-fructose 1,6-bisphosphate + H2O = beta-D-fructose 6-phosphate + phosphate. The protein operates within carbohydrate biosynthesis; gluconeogenesis. In Listeria monocytogenes serotype 4b (strain CLIP80459), this protein is Fructose-1,6-bisphosphatase class 3.